We begin with the raw amino-acid sequence, 140 residues long: Nucleoside diphosphate kinase (140 aa).

The ATP site is built by Lys11, Phe59, Arg87, Thr93, Arg104, and Asn114. His117 acts as the Pros-phosphohistidine intermediate in catalysis.

It belongs to the NDK family. In terms of assembly, homotetramer. The cofactor is Mg(2+).

Its subcellular location is the cytoplasm. The enzyme catalyses a 2'-deoxyribonucleoside 5'-diphosphate + ATP = a 2'-deoxyribonucleoside 5'-triphosphate + ADP. It catalyses the reaction a ribonucleoside 5'-diphosphate + ATP = a ribonucleoside 5'-triphosphate + ADP. Functionally, major role in the synthesis of nucleoside triphosphates other than ATP. The ATP gamma phosphate is transferred to the NDP beta phosphate via a ping-pong mechanism, using a phosphorylated active-site intermediate. In Rhizobium johnstonii (strain DSM 114642 / LMG 32736 / 3841) (Rhizobium leguminosarum bv. viciae), this protein is Nucleoside diphosphate kinase.